Reading from the N-terminus, the 297-residue chain is 4-hydroxy-tetrahydrodipicolinate synthase (297 aa).

Thr50 lines the pyruvate pocket. Catalysis depends on Tyr138, which acts as the Proton donor/acceptor. Catalysis depends on Lys166, which acts as the Schiff-base intermediate with substrate. Residue Ile208 coordinates pyruvate.

Belongs to the DapA family. Homotetramer; dimer of dimers.

It is found in the cytoplasm. It catalyses the reaction L-aspartate 4-semialdehyde + pyruvate = (2S,4S)-4-hydroxy-2,3,4,5-tetrahydrodipicolinate + H2O + H(+). It functions in the pathway amino-acid biosynthesis; L-lysine biosynthesis via DAP pathway; (S)-tetrahydrodipicolinate from L-aspartate: step 3/4. Its function is as follows. Catalyzes the condensation of (S)-aspartate-beta-semialdehyde [(S)-ASA] and pyruvate to 4-hydroxy-tetrahydrodipicolinate (HTPA). This is 4-hydroxy-tetrahydrodipicolinate synthase from Desulfotalea psychrophila (strain LSv54 / DSM 12343).